The primary structure comprises 552 residues: uncharacterized protein (552 aa).

The next 4 helical transmembrane spans lie at 127 to 147 (AIMLSFILILFQPFFIIISLL), 160 to 180 (LIIVTCIILSTLIALLSYINI), 393 to 413 (LTKQISLFLSISLFLCCLSAV), and 517 to 537 (VIDSWFDEVYAFACVFTFICI).

It localises to the membrane. This is an uncharacterized protein from Saccharomyces cerevisiae (strain ATCC 204508 / S288c) (Baker's yeast).